The chain runs to 329 residues: Ribosomal RNA small subunit methyltransferase H (329 aa).

Residues 39-41 (GGY), Asp57, Phe84, Asp100, and Gln107 contribute to the S-adenosyl-L-methionine site. The disordered stretch occupies residues 285–305 (GPDKDELAQNPRSRSALLRVG).

This sequence belongs to the methyltransferase superfamily. RsmH family.

The protein resides in the cytoplasm. It carries out the reaction cytidine(1402) in 16S rRNA + S-adenosyl-L-methionine = N(4)-methylcytidine(1402) in 16S rRNA + S-adenosyl-L-homocysteine + H(+). Functionally, specifically methylates the N4 position of cytidine in position 1402 (C1402) of 16S rRNA. The chain is Ribosomal RNA small subunit methyltransferase H from Ruegeria sp. (strain TM1040) (Silicibacter sp.).